Consider the following 294-residue polypeptide: Mitochondrial HMG-box protein CIM1 (294 aa).

A mitochondrion-targeting transit peptide spans 1-90 (MKATLLLKAQ…RLYYASFCQS (90 aa)). Residues 27–102 (NRTPYTAFQY…IDILNVSKIE (76 aa)) are HMG-box A. Residues 110-258 (PIPAMSEYLL…IQILQKNMDI (149 aa)) are HMG-box B.

The protein resides in the mitochondrion matrix. In terms of biological role, mitochondrial HMG-box protein that limits the copy number of mitochondrial DNA (mtDNA), antagonizing HMG-box containing protein ABF2, a mtDNA packaging factor. The polypeptide is Mitochondrial HMG-box protein CIM1 (Saccharomyces cerevisiae (strain ATCC 204508 / S288c) (Baker's yeast)).